The sequence spans 97 residues: Histone H1.C2 (97 aa).

The disordered stretch occupies residues alanine 24 to lysine 97. Basic residues predominate over residues alanine 31–lysine 97.

Its subcellular location is the nucleus. It localises to the chromosome. The protein is Histone H1.C2 of Trypanosoma cruzi.